We begin with the raw amino-acid sequence, 253 residues long: REF/SRPP-like protein OsI_017815 (253 aa).

The disordered stretch occupies residues 1 to 26 (MADSGSDAPISNRPEEEVTVEKTPEM). Residues 13-26 (RPEEEVTVEKTPEM) show a composition bias toward basic and acidic residues.

It belongs to the REF/SRPP family.

This is REF/SRPP-like protein OsI_017815 from Oryza sativa subsp. indica (Rice).